Reading from the N-terminus, the 61-residue chain is MDTKLLDILACPICKGPLKLSADKTELISKGAGLAYPIRDGIPVMLESEARTLTTDERLDK.

The protein belongs to the UPF0434 family.

In Pseudomonas fluorescens (strain SBW25), this protein is UPF0434 protein PFLU_3771.